Reading from the N-terminus, the 202-residue chain is CASP-like protein 2B1 (202 aa).

Over 1 to 29 (MSYLGVGVSPGNVPVYHGTNSKVIDRRVR) the chain is Cytoplasmic. The chain crosses the membrane as a helical span at residues 30–50 (LAELVLRCVICCLGVLAAVLV). Over 51 to 72 (GTDTQVKEIFSIQKKARFTDMK) the chain is Extracellular. The helical transmembrane segment at 73 to 93 (ALVFLVAANGIAAAYSFVQGV) threads the bilayer. At 94 to 109 (RCVVGMVKGSVLFSKP) the chain is on the cytoplasmic side. The chain crosses the membrane as a helical span at residues 110–132 (LAWVIFSGDQMMAYLTMSAVAAA). Residues 133–164 (AQSSVFAKLGQPDLQWMKICTMYGKFCNQVGE) lie on the Extracellular side of the membrane. Residues 165–185 (GIASALLVSVSMVVLSCISAF) traverse the membrane as a helical segment. Topologically, residues 186–202 (SLFRLYGGNKGKDGARW) are cytoplasmic.

This sequence belongs to the Casparian strip membrane proteins (CASP) family. As to quaternary structure, homodimer and heterodimers.

The protein resides in the cell membrane. This Populus trichocarpa (Western balsam poplar) protein is CASP-like protein 2B1.